The chain runs to 454 residues: MQLKIKEIFNQDYVKLEGQKIQIKAWVRSNRDSKKIGFLVLNDGSSLTNLQAVYRVDKIDNYEEIAAARMWAAVVIEGVIKLTPTAKQPLELEVLNAQILKQSDEDFLLSNNDLNLETLRLNAHLRPRTNLFHAIMKVRATLAFAVHEFMNQNEYSWLAAPLFTGNDAEGAGETFSIQKFDNEEFFGKQTHLSVTGQLQAEAYAQAFGNVYTFGPTFRAEKSHTNRHLAEFWMIEPEMAFVDLKGMQDIVEDLVKHVIKAVLEKNQQELEFLAQRNDENLIKKLQKVVESKFERIEYKDAVKILADAVKNGHQFENNEIFFGMDLGSEHERYMCETYHQGPVFLQNYPKDIKAFYMKLNDDQQTVASTDLLIPGVGELVGGSQREDSYEKLLKRCQELKMPIESLQWYLDLRRFGYYMSSGFGIGFERLVMYVTGVNNIKDTIPFPRSHGQIEF.

It belongs to the class-II aminoacyl-tRNA synthetase family. Homodimer.

The protein localises to the cytoplasm. The enzyme catalyses tRNA(Asn) + L-asparagine + ATP = L-asparaginyl-tRNA(Asn) + AMP + diphosphate + H(+). In Ureaplasma parvum serovar 3 (strain ATCC 27815 / 27 / NCTC 11736), this protein is Asparagine--tRNA ligase.